The primary structure comprises 188 residues: Protein ORFV073 (188 aa).

In terms of assembly, interacts with host IKBKG; this interaction inhibits host NF-kappa-B pathway activation.

Its subcellular location is the host nucleus. The protein resides in the host cytoplasm. It localises to the host perinuclear region. The protein localises to the virion. Its function is as follows. Plays a role in the inhibition of the host NF-kappa-B pathway early during infection. Prevents the host RELA subunit from reaching the nucleus and activate transcription. The polypeptide is Protein ORFV073 (Capra hircus (Goat)).